The primary structure comprises 350 residues: S-adenosylmethionine:tRNA ribosyltransferase-isomerase (350 aa).

Belongs to the QueA family. As to quaternary structure, monomer.

Its subcellular location is the cytoplasm. The catalysed reaction is 7-aminomethyl-7-carbaguanosine(34) in tRNA + S-adenosyl-L-methionine = epoxyqueuosine(34) in tRNA + adenine + L-methionine + 2 H(+). It functions in the pathway tRNA modification; tRNA-queuosine biosynthesis. Transfers and isomerizes the ribose moiety from AdoMet to the 7-aminomethyl group of 7-deazaguanine (preQ1-tRNA) to give epoxyqueuosine (oQ-tRNA). The protein is S-adenosylmethionine:tRNA ribosyltransferase-isomerase of Bacillus cereus (strain B4264).